The primary structure comprises 1037 residues: MATESTPSEIIERERKKLLEILQHDPDSILDTLTSRRLISEEEYETLENVTDLLKKSRKLLILVQKKGEATCQHFLKCLFSTFPQSAAICGLRHEVLKHENTVPPQSMGASSNSEDAFSPGIKQPEAPEITVFFSEKEHLDLETSEFFRDKKTSYRETALSARKNEKEYDTPEVTLSYSVEKVGCEVPATITYIKDGQRYEELDDSLYLGKEEYLGSVDTPEDAEATVEEEVYDDPEHVGYDGEEDFENSETTEFSGEEPSYEGSETSLSLEEEQEKSIEERKKVFKDVLLCLNMDRSRKVLPDFVKQFSLDRGCKWTPESPGDLAWNFLMKVQARDVTARDSILSHKVLDEDSKEDLLAGVENLEIRDIQTINPLDVLCATMLCSDSSLQRQVMSNMYQCQFALPLLLPDAENNKSILMLGAMKDIVKKQSTQFSGGPTEDTEKFLTLMKMPVISFVRLGYCSFSKSRILNTLLSPAQLKLHKIFLHQDLPLLVLPRQISDGLVEITWCFPDSDDRKENPFFQKPVALANLRGNLESFWTQFGFLMEVSSAVFFFTDCLGEKEWDLLMFLGEAAIERCYFVLSSQARESEEAQIFQRILNLKPAQLLFWERGDAGDRRKNMEGLQAALQEVMFSSCLRCVSVEDMAALARELGIQVDEDFENTQRIQVSSGENMAGTAEGEGQQRHSQLKSSSKSQALMPIQEPGTQCELSQNLQNLYGTPVFRPVLENSWLFPTRIGGNFNHVSLKASWVMGRPFGSEQRPKWFHPLPFQNAGAQGRGKSFGIQSFHPQIFYSGERFMKFSRVARGCHSNGTFGRLPRPICQHVQACPERPQMMGTLERSRAVASKIGHSYSLDSQPARAVGKPWPQQACTRVTELTEATGKLIRTSHIGKPHPQSFQPAAATQKLRPASQQGVQMKTQGGASNPALQIGSHPMCKSSQFKSDQSNPSTVKHSQPKPFHSVPSQPKSSQTKSCQSQPSQTKPSPCKSTQPKPSQPWPPQSKPSQPRPPQPKSSSTNPSQAKAHHSKAGQKRGGKH.

N-acetylalanine is present on Ala2. Positions 3–94 (TESTPSEIIE…QSAAICGLRH (92 aa)) constitute a CARD domain. A Phosphoserine modification is found at Ser154. 3 disordered regions span residues 235-270 (DPEHVGYDGEEDFENSETTEFSGEEPSYEGSETSLS), 669-704 (VSSGENMAGTAEGEGQQRHSQLKSSSKSQALMPIQE), and 887-1037 (RTSH…GGKH). Over residues 242–261 (DGEEDFENSETTEFSGEEPS) the composition is skewed to acidic residues. A compositionally biased stretch (low complexity) spans 690–699 (LKSSSKSQAL). Composition is skewed to polar residues over residues 911 to 928 (ASQQGVQMKTQGGASNPA), 938 to 954 (KSSQFKSDQSNPSTVKH), and 963 to 984 (VPSQPKSSQTKSCQSQPSQTKP). Ser985 is modified (phosphoserine). The span at 994-1012 (PSQPWPPQSKPSQPRPPQP) shows a compositional bias: pro residues. Positions 1023-1037 (KAHHSKAGQKRGGKH) are enriched in basic residues.

In terms of biological role, may be involved in apoptosis. This chain is Caspase recruitment domain-containing protein 6 (CARD6), found in Homo sapiens (Human).